The chain runs to 200 residues: Lipopolysaccharide core heptose(II)-phosphate phosphatase (200 aa).

The signal sequence occupies residues 1 to 25; it reads MLAFCRSSLKSKKYFIILLALAAIA.

It belongs to the phosphoglycerate mutase family. Ais subfamily.

The protein localises to the periplasm. It participates in bacterial outer membrane biogenesis; lipopolysaccharide metabolism. Its function is as follows. Catalyzes the dephosphorylation of heptose(II) of the outer membrane lipopolysaccharide core. The polypeptide is Lipopolysaccharide core heptose(II)-phosphate phosphatase (Escherichia coli O6:K15:H31 (strain 536 / UPEC)).